The following is a 117-amino-acid chain: MNAPPAFESFLLFEGEKKITINKDTKVPNACLFTINKEDHTLGNIIKSQLLKDPQVLFAGYKVPHPLEHKIIIRVQTTPDYSPQEAFTNAITDLISELSLLEERFRGAIKDKQEGIE.

Methionine 1 is modified (N-acetylmethionine).

The protein belongs to the archaeal Rpo11/eukaryotic RPB11/RPC19 RNA polymerase subunit family. In terms of assembly, component of the RNA polymerase II (Pol II) core complex consisting of 12 subunits: a ten-subunit catalytic core composed of POLR2A/RPB1, POLR2B/RPB2, POLR2C/RPB3, POLR2I/RPB9, POLR2J/RPB11, POLR2E/RPABC1, POLR2F/RPABC2, POLR2H/RPABC3, POLR2K/RPABC4 and POLR2L/RPABC5 and a mobile stalk composed of two subunits POLR2D/RPB4 and POLR2G/RPB7, protruding from the core and functioning primarily in transcription initiation. Part of Pol II(G) complex, in which Pol II core associates with an additional subunit POLR2M; unlike conventional Pol II, Pol II(G) functions as a transcriptional repressor. Part of TBP-based Pol II pre-initiation complex (PIC), in which Pol II core assembles with general transcription factors and other specific initiation factors including GTF2E1, GTF2E2, GTF2F1, GTF2F2, TCEA1, ERCC2, ERCC3, GTF2H2, GTF2H3, GTF2H4, GTF2H5, GTF2A1, GTF2A2, GTF2B and TBP; this large multi-subunit PIC complex mediates DNA unwinding and targets Pol II core to the transcription start site where the first phosphodiester bond forms. Interacts with AATF. Interacts with PTPN6; this interaction promotes the recruitment of RNA pol II to the PCK1 promoter.

The protein localises to the nucleus. Functionally, core component of RNA polymerase II (Pol II), a DNA-dependent RNA polymerase which synthesizes mRNA precursors and many functional non-coding RNAs using the four ribonucleoside triphosphates as substrates. This is DNA-directed RNA polymerase II subunit RPB11 (Polr2j) from Mus musculus (Mouse).